The sequence spans 654 residues: Phosphate transport system permease protein PstA homolog (654 aa).

Helical transmembrane passes span 22–42, 64–84, 113–133, 143–163, 266–286, 303–323, 368–388, 417–437, 453–473, 486–506, 535–555, and 613–633; these read LAFL…TEAT, AGIW…LIIA, ILSG…LSIF, LSLL…VISL, VLYI…FFAI, ISNF…ALFV, ELIC…FVFI, LVII…IAIW, FVID…GLSF, NGTS…LFLI, IFKI…ILSI, and VVFL…LFLL. An ABC transmembrane type-1 1 domain is found at 70–285; that stretch reads LLVSFIVSIG…ILVSLLNFFA (216 aa). Positions 413–623 constitute an ABC transmembrane type-1 2 domain; sequence LVNTLVIILI…VFLILLIFFS (211 aa).

This sequence belongs to the binding-protein-dependent transport system permease family. CysTW subfamily.

It localises to the cell membrane. In terms of biological role, could be part of a binding-protein-dependent transport system for phosphate; probably responsible for the translocation of the substrate across the membrane. In Mycoplasma genitalium (strain ATCC 33530 / DSM 19775 / NCTC 10195 / G37) (Mycoplasmoides genitalium), this protein is Phosphate transport system permease protein PstA homolog (pstA).